We begin with the raw amino-acid sequence, 317 residues long: Peroxisome biogenesis protein 7 (317 aa).

WD repeat units lie at residues 58 to 98 (DTAD…PSNP), 104 to 144 (EHAR…SVRT), 147 to 187 (EHAY…STMI), 190 to 230 (AHDF…VPLA), 234 to 274 (GHGY…ALVG), and 278 to 317 (HHTEFAVGIDMSVLVEGLMASTGWDELVYVWQQGMDPRAS).

Belongs to the WD repeat peroxin-7 family. Interacts with PEX5; interaction only takes place when PEX7 is associated with cargo proteins. Interacts with PEX13 (via N-terminus) and PEX12 (via C-terminus), but not with PEX14. As to expression, expressed in siliques and leaves, but barely detectable in flowers, stems and roots.

The protein localises to the cytoplasm. The protein resides in the cytosol. Its subcellular location is the peroxisome matrix. Its function is as follows. Receptor required for the peroxisomal import of proteins containing a C-terminal PTS2-type peroxisomal targeting signal. Specifically binds to cargo proteins containing a PTS2 peroxisomal targeting signal in the cytosol. Cargo protein-binding triggers interaction with PEX5 and formation of a ternary complex composed of PEX5 and PEX7 along with PTS2-containing cargo proteins, which is tranlocated into peroxisomes by passing through the PEX13-PEX14 docking complex. The chain is Peroxisome biogenesis protein 7 (PEX7) from Arabidopsis thaliana (Mouse-ear cress).